The chain runs to 164 residues: ATP synthase subunit b (164 aa).

A helical transmembrane segment spans residues 6 to 26 (GELIGNFILITGSFILLLVLI).

It belongs to the ATPase B chain family. As to quaternary structure, F-type ATPases have 2 components, F(1) - the catalytic core - and F(0) - the membrane proton channel. F(1) has five subunits: alpha(3), beta(3), gamma(1), delta(1), epsilon(1). F(0) has three main subunits: a(1), b(2) and c(10-14). The alpha and beta chains form an alternating ring which encloses part of the gamma chain. F(1) is attached to F(0) by a central stalk formed by the gamma and epsilon chains, while a peripheral stalk is formed by the delta and b chains.

The protein resides in the cell membrane. F(1)F(0) ATP synthase produces ATP from ADP in the presence of a proton or sodium gradient. F-type ATPases consist of two structural domains, F(1) containing the extramembraneous catalytic core and F(0) containing the membrane proton channel, linked together by a central stalk and a peripheral stalk. During catalysis, ATP synthesis in the catalytic domain of F(1) is coupled via a rotary mechanism of the central stalk subunits to proton translocation. Its function is as follows. Component of the F(0) channel, it forms part of the peripheral stalk, linking F(1) to F(0). The polypeptide is ATP synthase subunit b (Streptococcus pneumoniae serotype 2 (strain D39 / NCTC 7466)).